The primary structure comprises 118 residues: Small ribosomal subunit protein uS13 (118 aa).

A disordered region spans residues 94–118 (SLPVRGQRTKTNARTRKGPRKPIKK).

Belongs to the universal ribosomal protein uS13 family. Part of the 30S ribosomal subunit. Forms a loose heterodimer with protein S19. Forms two bridges to the 50S subunit in the 70S ribosome.

Located at the top of the head of the 30S subunit, it contacts several helices of the 16S rRNA. In the 70S ribosome it contacts the 23S rRNA (bridge B1a) and protein L5 of the 50S subunit (bridge B1b), connecting the 2 subunits; these bridges are implicated in subunit movement. Contacts the tRNAs in the A and P-sites. The polypeptide is Small ribosomal subunit protein uS13 (Actinobacillus pleuropneumoniae serotype 5b (strain L20)).